The following is an 81-amino-acid chain: Cell division protein ZapB (81 aa).

Positions 6–80 (EVFEKLEAKV…LQALLGRMEE (75 aa)) form a coiled coil. The span at 38–47 (SLAQDVQSAQ) shows a compositional bias: polar residues. The disordered stretch occupies residues 38-67 (SLAQDVQSAQHQREELERENNHLKEQQSGW). Basic and acidic residues predominate over residues 48–62 (HQREELERENNHLKE).

It belongs to the ZapB family. As to quaternary structure, homodimer. The ends of the coiled-coil dimer bind to each other, forming polymers. Interacts with FtsZ.

The protein resides in the cytoplasm. Its function is as follows. Non-essential, abundant cell division factor that is required for proper Z-ring formation. It is recruited early to the divisome by direct interaction with FtsZ, stimulating Z-ring assembly and thereby promoting cell division earlier in the cell cycle. Its recruitment to the Z-ring requires functional FtsA or ZipA. The protein is Cell division protein ZapB of Citrobacter koseri (strain ATCC BAA-895 / CDC 4225-83 / SGSC4696).